Reading from the N-terminus, the 538-residue chain is Casein kinase I homolog 1 (538 aa).

The disordered stretch occupies residues 39–61 (SPARSSMTATTAANSNSNSSRDD). The span at 41–57 (ARSSMTATTAANSNSNS) shows a compositional bias: low complexity. Residues 69 to 353 (YKIGKKIGEG…ETADGQYDWM (285 aa)) form the Protein kinase domain. ATP contacts are provided by residues 75 to 83 (IGEGSFGVL) and lysine 98. Aspartate 188 functions as the Proton acceptor in the catalytic mechanism. Disordered stretches follow at residues 366–428 (NKKP…KPKL) and 474–527 (QQQL…LAAS). Composition is skewed to low complexity over residues 391-410 (QLQM…QQQQ) and 474-498 (QQQL…QFGA). A phosphoserine mark is found at serine 522, serine 523, and serine 527. Residues cysteine 537 and cysteine 538 are each lipidated (S-palmitoyl cysteine).

This sequence belongs to the protein kinase superfamily. CK1 Ser/Thr protein kinase family. Casein kinase I subfamily. Post-translationally, palmitoylated by AKR1.

The protein resides in the cell membrane. It is found in the mitochondrion membrane. It carries out the reaction L-seryl-[protein] + ATP = O-phospho-L-seryl-[protein] + ADP + H(+). The enzyme catalyses L-threonyl-[protein] + ATP = O-phospho-L-threonyl-[protein] + ADP + H(+). In terms of biological role, casein kinases are operationally defined by their preferential utilization of acidic proteins such as caseins as substrates. The sequence is that of Casein kinase I homolog 1 (YCK1) from Saccharomyces cerevisiae (strain ATCC 204508 / S288c) (Baker's yeast).